Reading from the N-terminus, the 467-residue chain is MGFSAEQAKKDGKDQSPVSESSSVGGTSPATASSVVSPNEPKLSGKEAKALKKARKQASRRAKAEAAAANNPPGVSEEKKVAIPNKNSNQQKKASKQNPQNSPETDANLQEKKIFEEKQVSIFSHLDWRRRRTTENIPKDIHPAVIRLGLKLANYKIFGSNQRCIDLLKTFKIVIQDYQTPYGTTLSRHLTTHINSQIAYLVSTRPLSISMGNAIRFLKLEISVLDIDLTDDEGKELLLEKIDSYIRDRIIIAGQVIVQAATEKIQDGDVILTYLHSSTVNDVLIHAKNVGKKFRVVVVDSRPEFEGRVCLKLLTEHGIECTYVMISALSYIMQEVTKIFLGGHAMLSNGALYSRAGTSLISLLGHESNVPVIACCESYKFTERIQLDSLVYNELAPGDQLVNMGVDDFEEKPGVLANWKSVKNLKLLSLKYDVTPPRLITVCVCEMGLLPSTSVPAIINEFKQVYA.

The interval 1 to 106 (MGFSAEQAKK…QNPQNSPETD (106 aa)) is disordered. Ser-16, Ser-19, Ser-21, and Ser-23 each carry phosphoserine. The span at 16–37 (SPVSESSSVGGTSPATASSVVS) shows a compositional bias: polar residues. Thr-27 carries the post-translational modification Phosphothreonine. Phosphoserine occurs at positions 28 and 37. Basic residues predominate over residues 51–61 (LKKARKQASRR). A compositionally biased stretch (low complexity) spans 84–102 (PNKNSNQQKKASKQNPQNS).

Belongs to the eIF-2B alpha/beta/delta subunits family. Component of the translation initiation factor 2B (eIF2B) complex which is a heterodecamer of two sets of five different subunits: alpha, beta, gamma, delta and epsilon. Subunits alpha, beta and delta comprise a regulatory subcomplex and subunits epsilon and gamma comprise a catalytic subcomplex. Within the complex, the hexameric regulatory complex resides at the center, with the two heterodimeric catalytic subcomplexes bound on opposite sides.

It localises to the cytoplasm. It is found in the cytosol. Functionally, acts as a component of the translation initiation factor 2B (eIF2B) complex, which catalyzes the exchange of GDP for GTP on the eukaryotic initiation factor 2 (eIF2) complex gamma subunit. Its guanine nucleotide exchange factor activity is repressed when bound to eIF2 complex phosphorylated on the alpha subunit, thereby limiting the amount of methionyl-initiator methionine tRNA available to the ribosome and consequently global translation is repressed. The sequence is that of Translation initiation factor eIF2B subunit delta (tif224) from Schizosaccharomyces pombe (strain 972 / ATCC 24843) (Fission yeast).